We begin with the raw amino-acid sequence, 412 residues long: MAFQCQRDCYMQEFDSCVVSCVPAELKLENNGRKEKLTGFNVKLKDTILFPEGGGQPDDHGTIGGVPVLRVLRQGPDAVHFVSSALEEGQEVHIKLDWERRFDHMQQHSGQHLITALADTMFGYKTTSWDLGRQRSSIELDTATVKPGEMEALETAVNEKIRAHVPVTVNLLSIDDPAVEKVRSRGLPDDHAGPIRIIDIEGVDANMCCGTHVSNLSHLQVIKILGTEKGKKNKTNLIFIAGNRVLKYAEKSYNIEKSLTVLLKTGADEHVDAVDKLQKTVKRLQKSNLTILREMAVLIAQNFKSKPDRGHFFSLHNKDGDNEFMNIVANEIGFQDTLIFMTVGDEKGAGLFLIAGPENIVTEVGPRVSELLQGKGAGKAGRYQGKANSLVKRAEVEALLKERSYKCTAGDE.

Zn(2+)-binding residues include His108, His112, Cys208, and His212.

It belongs to the class-II aminoacyl-tRNA synthetase family. Alax-L subfamily. It depends on Zn(2+) as a cofactor.

The protein localises to the cytoplasm. Functions in trans to edit the amino acid moiety from incorrectly charged tRNA(Ala). The sequence is that of Alanyl-tRNA editing protein Aarsd1 (aarsd1) from Danio rerio (Zebrafish).